Here is a 197-residue protein sequence, read N- to C-terminus: Phospholipid hydroperoxide glutathione peroxidase (197 aa).

Position 40 is a phosphoserine (Ser40). Sec73 is a catalytic residue. Sec73 is a non-standard amino acid (selenocysteine).

This sequence belongs to the glutathione peroxidase family. In terms of assembly, monomer. Has a tendency to form higher mass oligomers. Interacts with FUNDC1; this interaction promotes GPX4 recruitment into mitochondria through TOM/TIM complex where it is degraded by mitophagy.

It is found in the mitochondrion. The protein resides in the cytoplasm. The catalysed reaction is a hydroperoxy polyunsaturated fatty acid + 2 glutathione = a hydroxy polyunsaturated fatty acid + glutathione disulfide + H2O. It carries out the reaction 2 glutathione + H2O2 = glutathione disulfide + 2 H2O. The enzyme catalyses tert-butyl hydroperoxide + 2 glutathione = tert-butanol + glutathione disulfide + H2O. It catalyses the reaction cumene hydroperoxide + 2 glutathione = 2-phenylpropan-2-ol + glutathione disulfide + H2O. The catalysed reaction is (9S)-hydroperoxy-(10E,12Z)-octadecadienoate + 2 glutathione = (9S)-hydroxy-(10E,12Z)-octadecadienoate + glutathione disulfide + H2O. It carries out the reaction (13S)-hydroperoxy-(9Z,11E)-octadecadienoate + 2 glutathione = (13S)-hydroxy-(9Z,11E)-octadecadienoate + glutathione disulfide + H2O. The enzyme catalyses (5S)-hydroperoxy-(6E,8Z,11Z,14Z)-eicosatetraenoate + 2 glutathione = (5S)-hydroxy-(6E,8Z,11Z,14Z)-eicosatetraenoate + glutathione disulfide + H2O. It catalyses the reaction (12R)-hydroperoxy-(5Z,8Z,10E,14Z)-eicosatetraenoate + 2 glutathione = (12R)-hydroxy-(5Z,8Z,10E,14Z)-eicosatetraenoate + glutathione disulfide + H2O. The catalysed reaction is (12S)-hydroperoxy-(5Z,8Z,10E,14Z)-eicosatetraenoate + 2 glutathione = (12S)-hydroxy-(5Z,8Z,10E,14Z)-eicosatetraenoate + glutathione disulfide + H2O. It carries out the reaction (15S)-hydroperoxy-(5Z,8Z,11Z,13E)-eicosatetraenoate + 2 glutathione = (15S)-hydroxy-(5Z,8Z,11Z,13E)-eicosatetraenoate + glutathione disulfide + H2O. The enzyme catalyses (5S)-hydroperoxy-(6E,8Z,11Z,14Z,17Z)-eicosapentaenoate + 2 glutathione = (5S)-hydroxy-(6E,8Z,11Z,14Z,17Z)-eicosapentaenoate + glutathione disulfide + H2O. It catalyses the reaction (12S)-hydroperoxy-(5Z,8Z,10E,14Z,17Z)-eicosapentaenoate + 2 glutathione = (12S)-hydroxy-(5Z,8Z,10E,14Z,17Z)-eicosapentaenoate + glutathione disulfide + H2O. The catalysed reaction is (15S)-hydroperoxy-(5Z,8Z,11Z,13E,17Z)-eicosapentaenoate + 2 glutathione = (15S)-hydroxy-(5Z,8Z,11Z,13E,17Z)-eicosapentaenoate + glutathione disulfide + H2O. It carries out the reaction (15S)-hydroperoxy-(11Z,13E)-eicosadienoate + 2 glutathione = (15S)-hydroxy-(11Z,13E)-eicosadienoate + glutathione disulfide + H2O. The enzyme catalyses (17S)-hydroperoxy-(4Z,7Z,10Z,13Z,15E,19Z)-docosahexaenoate + 2 glutathione = (17S)-hydroxy-(4Z,7Z,10Z,13Z,15E,19Z)-docosahexaenoate + glutathione disulfide + H2O. It catalyses the reaction a hydroperoxy-1,2-diacyl-glycero-3-phosphocholine + 2 glutathione = a hydroxy-1,2-diacyl-glycero-3-phosphocholine + glutathione disulfide + H2O. In terms of biological role, essential antioxidant peroxidase that directly reduces phospholipid hydroperoxide even if they are incorporated in membranes and lipoproteins. Can also reduce fatty acid hydroperoxide, cholesterol hydroperoxide and thymine hydroperoxide. Plays a key role in protecting cells from oxidative damage by preventing membrane lipid peroxidation. Required to prevent cells from ferroptosis, a non-apoptotic cell death resulting from an iron-dependent accumulation of lipid reactive oxygen species. The presence of selenocysteine (Sec) versus Cys at the active site is essential for life: it provides resistance to overoxidation and prevents cells against ferroptosis. The presence of Sec at the active site is also essential for the survival of a specific type of parvalbumin-positive interneurons, thereby preventing against fatal epileptic seizures. May be required to protect cells from the toxicity of ingested lipid hydroperoxides. Required for normal sperm development and male fertility. Essential for maturation and survival of photoreceptor cells. Plays a role in a primary T-cell response to viral and parasitic infection by protecting T-cells from ferroptosis and by supporting T-cell expansion. Plays a role of glutathione peroxidase in platelets in the arachidonic acid metabolism. Reduces hydroperoxy ester lipids formed by a 15-lipoxygenase that may play a role as down-regulator of the cellular 15-lipoxygenase pathway. Can also reduce small soluble hydroperoxides such as H2O2, cumene hydroperoxide and tert-butyl hydroperoxide. In Hylobates lar (Lar gibbon), this protein is Phospholipid hydroperoxide glutathione peroxidase.